The primary structure comprises 422 residues: Growth arrest-specific protein 7 (422 aa).

The interval 1 to 117 (MATALQKPGM…SPGRKQSKEN (117 aa)) is disordered. In terms of domain architecture, WW spans 22–55 (VILPPGWHSYLSPQGRRYYVNTTTNETTWERPSS). A compositionally biased stretch (polar residues) spans 41–52 (VNTTTNETTWER). Positions 53-65 (PSSSPGISASPGP) are enriched in low complexity. A phosphoserine mark is found at S62 and S108. Residues 95–117 (RKSTGDSQNLGSSSPGRKQSKEN) show a composition bias toward polar residues. The F-BAR domain occupies 141–402 (TEWSYCDYFW…LLRKVDPAKD (262 aa)). Residues 254 to 329 (ENFKKDMKKC…RKSTQAGDDL (76 aa)) are a coiled coil.

Its subcellular location is the cytoplasm. May play a role in promoting maturation and morphological differentiation of cerebellar neurons. The polypeptide is Growth arrest-specific protein 7 (Gas7) (Rattus norvegicus (Rat)).